A 229-amino-acid polypeptide reads, in one-letter code: Probable ribonuclease H (229 aa).

In terms of domain architecture, RNase H type-1 spans 42-164; sequence LQDISLEFDK…ADFLANSAAK (123 aa). A divalent metal cation is bound by residues glutamate 60, aspartate 87, and aspartate 156.

It belongs to the RNase H family. A divalent metal cation serves as cofactor.

The catalysed reaction is Endonucleolytic cleavage to 5'-phosphomonoester.. In terms of biological role, endonuclease that specifically degrades the RNA of RNA-DNA hybrids. The protein is Probable ribonuclease H (RNH1) of Acanthamoeba polyphaga mimivirus (APMV).